The primary structure comprises 530 residues: Cilia- and flagella-associated protein 97 (530 aa).

Residue serine 19 is modified to Phosphoserine. Disordered regions lie at residues 29-83 (TNSV…PVEN) and 116-258 (IPNR…LSTP). Residues 35–49 (KQNDDPKERIDKDTK) are compositionally biased toward basic and acidic residues. Positions 50-63 (NVNSNTGMQTTENY) are enriched in polar residues. Basic and acidic residues predominate over residues 67–82 (KGNERNVKFPPEHPVE). Positions 129–139 (GDYYTDGEESS) are enriched in acidic residues. A Phosphothreonine modification is found at threonine 133. Residues serine 138 and serine 139 each carry the phosphoserine modification. Low complexity predominate over residues 170–203 (SSSSSSSLSSSSSGSGTDCLDGGSDSHLSDSSPS). The residue at position 215 (serine 215) is a Phosphoserine. Over residues 227 to 236 (TETQPSSTTP) the composition is skewed to polar residues. Phosphoserine is present on residues serine 245 and serine 327. Positions 372-447 (KNYSFTREEV…ALLKRLEAVK (76 aa)) form a coiled coil. Disordered regions lie at residues 395–417 (LSRQAEKPGSKSTIPRSADHPPK) and 483–530 (QYSP…TAWL). The span at 491–501 (SRTSSATSGLS) shows a compositional bias: polar residues.

It belongs to the CFAP97 family.

The polypeptide is Cilia- and flagella-associated protein 97 (Pongo abelii (Sumatran orangutan)).